The following is a 233-amino-acid chain: Peroxisomal membrane protein 11-5 (233 aa).

The Cytoplasmic segment spans residues 1–92 (MSSLESARAD…PLILLGKSKN (92 aa)). Residues 93–113 (ALLSTFLFLDQIVWAGRTGIY) traverse the membrane as a helical segment. The Lumenal portion of the chain corresponds to 114–206 (KNKERAEFLS…LLQLAPKKVT (93 aa)). A helical transmembrane segment spans residues 207 to 226 (PRVTGAFGFASSLIACYQLL).

Belongs to the peroxin-11 family. Expressed in seedlings, roots, shoots, leaf sheaths, flag leaf, panicles, spikelets, and endosperm.

The protein localises to the peroxisome membrane. In terms of biological role, involved in peroxisomal proliferation. The sequence is that of Peroxisomal membrane protein 11-5 (PEX11-5) from Oryza sativa subsp. japonica (Rice).